A 504-amino-acid chain; its full sequence is Myocilin (504 aa).

An N-terminal signal peptide occupies residues 1–32; it reads MRFFCARCCSFGPEMPAVQLLLLACLVWDVGA. A glycan (N-linked (GlcNAc...) asparagine) is linked at asparagine 57. Residues 74-184 are a coiled coil; it reads LQRDSSTQRL…QEVARLRRGQ (111 aa). 2 disordered regions span residues 106 to 131 and 170 to 200; these read QAAR…RDQL and LESS…PGSR. Residues 122 to 131 show a composition bias toward basic and acidic residues; sequence GTLRRERDQL. In terms of domain architecture, Olfactomedin-like spans 244–503; it reads GCGELVWVGE…MVTYDIKLSK (260 aa). Cysteine 245 and cysteine 433 are oxidised to a cystine. 5 residues coordinate Ca(2+): aspartate 380, asparagine 428, alanine 429, isoleucine 477, and aspartate 478. The short motif at 502–504 is the Microbody targeting signal element; the sequence is SKM.

Homodimer (via N-terminus). Can also form higher oligomers. Interacts with OLFM3, FN1, NRCAM, GLDN and NFASC. Interacts (via N-terminus) with MYL2. Interacts with SFRP1, FRZB, FZD7, FZD10, FZD1 and WIF1; regulates Wnt signaling. Interacts with SNTA1; regulates muscle hypertrophy. Interacts with ERBB2 and ERBB3; activates ERBB2-ERBB3 signaling pathway. Interacts with SNCG; affects its secretion and its aggregation. Post-translationally, different isoforms may arise by post-translational modifications. In terms of processing, glycosylated. Palmitoylated. Post-translationally, undergoes a calcium-dependent proteolytic cleavage at Arg-226 by CAPN2 in the endoplasmic reticulum. The result is the production of two fragments, one of 35 kDa containing the C-terminal olfactomedin-like domain, and another of 20 kDa containing the N-terminal leucine zipper-like domain. As to expression, detected in aqueous humor. Detected in the eye (at protein level). Widely expressed. Highly expressed in various types of muscle, ciliary body, papillary sphincter, skeletal muscle, heart, and bone marrow-derived mesenchymal stem cells. Expressed predominantly in the retina. In normal eyes, found in the inner uveal meshwork region and the anterior portion of the meshwork. In contrast, in many glaucomatous eyes, it is found in more regions of the meshwork and seems to be expressed at higher levels than in normal eyes, regardless of the type or clinical severity of glaucoma. The myocilin 35 kDa fragment is detected in aqueous humor and to a lesser extent in iris and ciliary body.

The protein localises to the secreted. It localises to the golgi apparatus. It is found in the cytoplasmic vesicle. Its subcellular location is the extracellular space. The protein resides in the extracellular matrix. The protein localises to the extracellular exosome. It localises to the mitochondrion. It is found in the mitochondrion intermembrane space. Its subcellular location is the mitochondrion inner membrane. The protein resides in the mitochondrion outer membrane. The protein localises to the rough endoplasmic reticulum. It localises to the cell projection. It is found in the cilium. Its subcellular location is the endoplasmic reticulum. Functionally, secreted glycoprotein regulating the activation of different signaling pathways in adjacent cells to control different processes including cell adhesion, cell-matrix adhesion, cytoskeleton organization and cell migration. Promotes substrate adhesion, spreading and formation of focal contacts. Negatively regulates cell-matrix adhesion and stress fiber assembly through Rho protein signal transduction. Modulates the organization of actin cytoskeleton by stimulating the formation of stress fibers through interactions with components of Wnt signaling pathways. Promotes cell migration through activation of PTK2 and the downstream phosphatidylinositol 3-kinase signaling. Plays a role in bone formation and promotes osteoblast differentiation in a dose-dependent manner through mitogen-activated protein kinase signaling. Mediates myelination in the peripheral nervous system through ERBB2/ERBB3 signaling. Plays a role as a regulator of muscle hypertrophy through the components of dystrophin-associated protein complex. Involved in positive regulation of mitochondrial depolarization. Plays a role in neurite outgrowth. May participate in the obstruction of fluid outflow in the trabecular meshwork. The chain is Myocilin (MYOC) from Homo sapiens (Human).